A 271-amino-acid chain; its full sequence is Eukaryotic translation initiation factor 2 subunit beta (271 aa).

Residues 223–247 (CLGCQSPDTILSKENRLFFLRCEKC) form a C4-type zinc finger.

It belongs to the eIF-2-beta/eIF-5 family. As to quaternary structure, eukaryotic translation initiation factor 2 eIF2 is a heterotrimeric complex composed of an alpha, a beta and a gamma subunit.

Its subcellular location is the cytoplasm. The protein localises to the cytosol. Functionally, component of the eIF2 complex that functions in the early steps of protein synthesis by forming a ternary complex with GTP and initiator tRNA. This complex binds to a 40S ribosomal subunit, followed by mRNA binding to form a 43S pre-initiation complex (43S PIC). Junction of the 60S ribosomal subunit to form the 80S initiation complex is preceded by hydrolysis of the GTP bound to eIF2 and release of an eIF2-GDP binary complex. In order for eIF2 to recycle and catalyze another round of initiation, the GDP bound to eIF2 must exchange with GTP by way of a reaction catalyzed by eIF2B. The polypeptide is Eukaryotic translation initiation factor 2 subunit beta (Malus domestica (Apple)).